Reading from the N-terminus, the 150-residue chain is Large ribosomal subunit protein bL9 (150 aa).

This sequence belongs to the bacterial ribosomal protein bL9 family.

Its function is as follows. Binds to the 23S rRNA. The polypeptide is Large ribosomal subunit protein bL9 (Baumannia cicadellinicola subsp. Homalodisca coagulata).